Consider the following 111-residue polypeptide: Small ribosomal subunit protein mS38 (111 aa).

Positions 82–99 (RKRKKKMKKHKLRKRRKR) are enriched in basic residues. Residues 82–111 (RKRKKKMKKHKLRKRRKREKAERRKLSQGR) form a disordered region. The span at 100–111 (EKAERRKLSQGR) shows a compositional bias: basic and acidic residues.

It belongs to the mitochondrion-specific ribosomal protein mS38 family. In terms of assembly, component of the mitochondrial small ribosomal subunit (mt-SSU). Mature yeast 74S mitochondrial ribosomes consist of a small (37S) and a large (54S) subunit. The 37S small subunit contains a 15S ribosomal RNA (15S mt-rRNA) and 34 different proteins. The 54S large subunit contains a 21S rRNA (21S mt-rRNA) and 46 different proteins.

The protein localises to the mitochondrion. It is found in the mitochondrion inner membrane. Functionally, component of the mitochondrial ribosome (mitoribosome), a dedicated translation machinery responsible for the synthesis of mitochondrial genome-encoded proteins, including at least some of the essential transmembrane subunits of the mitochondrial respiratory chain. The mitoribosomes are attached to the mitochondrial inner membrane and translation products are cotranslationally integrated into the membrane. mS38 is also involved in the splicing of the COX1 mRNA. The polypeptide is Small ribosomal subunit protein mS38 (QRI5) (Saccharomyces cerevisiae (strain ATCC 204508 / S288c) (Baker's yeast)).